The sequence spans 805 residues: MWGVVMNVEEIEEEYKTSIKTGLSTEEAKKRLKIYGYNEIPEKKVHPIIKFLSYFWNPIAWMIEIAAILSAIIKHWVDFVIILILLLVNGVVGFWEEYKAENVIEFLKQKMALNARVLRDGKWQIIPAKELVPGDVVRIRIGDIVPADIILVDGDYLVVDESALTGESLPVEKKIGDIAYSGSIVKKGEMTGIVKATGLNTYFGKTVKLVEKAEKVSSYQKMIIKIGDYLIVLAVILIAIMVAVELFRGKSLIETAQFALVLAVSAIPAAMPAVLSITMAIGALNLAKKDAIVKKLVAIEELAGVDILCSDKTGTLTKNQLVCGEIIALNGFSKEDVVLFAALASREEDADAIDMAILNEAKKLGLMEKIKNYKIKKFIPFDPVIKRTEAEVTNDEEFKVSKGAPQVILDLCNADEELRRKVEEIVDKLAENGYRALGVAVYKNGRWHFAGIIPLYDPPREDAPLAVKKIKELGVIIKMVTGDHVAIAKNIARMLGIGDKIISISELLKKLKRGEIKEEKFDEIVEEADGFAEVFPEHKYKIVDSLQKRGHLVAMTGDGVNDAPALKKADCGIAVSNATDAARAAADIVLLSPGISVIVDAIQEARRIFQRMESYVIYRITETIRILFFVELCILILGIYPITALMIVLLAILNDIPILAIAYDNVVEPKSPVRWRMREILMLSTALGLSGVVSSFLIFYISDVFLHLTIAELQSFVFLKLILAGHATIFVTRIRDRLWKKPYPSKLLFWGVMGTNIIGTIVAAEGIFMAPIGWDLALFMWLYAHVWMLINDEIKMILLKRLKID.

Helical transmembrane passes span 53–73 (SYFWNPIAWMIEIAAILSAII), 75–95 (HWVDFVIILILLLVNGVVGFW), 226–246 (IGDYLIVLAVILIAIMVAVEL), and 258–278 (FALVLAVSAIPAAMPAVLSIT). The active-site 4-aspartylphosphate intermediate is the Asp311. Helical transmembrane passes span 615-637 (YVIYRITETIRILFFVELCILIL), 641-663 (PITALMIVLLAILNDIPILAIAY), 680-700 (ILMLSTALGLSGVVSSFLIFY), 712-734 (ELQSFVFLKLILAGHATIFVTRI), 747-769 (LLFWGVMGTNIIGTIVAAEGIFM), and 773-790 (GWDLALFMWLYAHVWMLI).

The protein belongs to the cation transport ATPase (P-type) (TC 3.A.3) family. Type IIIA subfamily.

It localises to the cell membrane. It carries out the reaction ATP + H2O = ADP + phosphate + H(+). The protein is Putative cation-transporting ATPase MJ1226 of Methanocaldococcus jannaschii (strain ATCC 43067 / DSM 2661 / JAL-1 / JCM 10045 / NBRC 100440) (Methanococcus jannaschii).